Consider the following 175-residue polypeptide: Arsenite oxidase subunit AioB (175 aa).

Positions 1–32 (MSDTINLTRRGFLKVSGSGVAVAATLSPIASA) form a signal peptide, tat-type signal. The 97-residue stretch at 62 to 158 (NEPVSFTYPD…LRYDEASDAL (97 aa)) folds into the Rieske domain. Residues Cys-102, His-104, Cys-120, and His-123 each coordinate [2Fe-2S] cluster. Cys-107 and Cys-122 form a disulfide bridge.

Belongs to the AOX family. Heterodimer consisting of a large and a small subunit. The cofactor is [2Fe-2S] cluster. Predicted to be exported by the Tat system. The position of the signal peptide cleavage has not been experimentally proven.

It catalyses the reaction 2 oxidized [azurin] + arsenite + H2O = 2 reduced [azurin] + arsenate + 3 H(+). Its function is as follows. Involved in the detoxification of arsenic. Oxidizes As(III)O3(3-) (arsenite) to the somewhat less toxic As(V)O4(3-) (arsenate). This is Arsenite oxidase subunit AioB (aioB) from Alcaligenes faecalis.